The primary structure comprises 358 residues: UDP-N-acetylglucosamine--N-acetylmuramyl-(pentapeptide) pyrophosphoryl-undecaprenol N-acetylglucosamine transferase (358 aa).

Residues 10 to 12 (TGG), N124, S196, and Q293 each bind UDP-N-acetyl-alpha-D-glucosamine.

This sequence belongs to the glycosyltransferase 28 family. MurG subfamily.

The protein localises to the cell membrane. It carries out the reaction di-trans,octa-cis-undecaprenyl diphospho-N-acetyl-alpha-D-muramoyl-L-alanyl-D-glutamyl-meso-2,6-diaminopimeloyl-D-alanyl-D-alanine + UDP-N-acetyl-alpha-D-glucosamine = di-trans,octa-cis-undecaprenyl diphospho-[N-acetyl-alpha-D-glucosaminyl-(1-&gt;4)]-N-acetyl-alpha-D-muramoyl-L-alanyl-D-glutamyl-meso-2,6-diaminopimeloyl-D-alanyl-D-alanine + UDP + H(+). Its pathway is cell wall biogenesis; peptidoglycan biosynthesis. Cell wall formation. Catalyzes the transfer of a GlcNAc subunit on undecaprenyl-pyrophosphoryl-MurNAc-pentapeptide (lipid intermediate I) to form undecaprenyl-pyrophosphoryl-MurNAc-(pentapeptide)GlcNAc (lipid intermediate II). The chain is UDP-N-acetylglucosamine--N-acetylmuramyl-(pentapeptide) pyrophosphoryl-undecaprenol N-acetylglucosamine transferase from Exiguobacterium sp. (strain ATCC BAA-1283 / AT1b).